Consider the following 407-residue polypeptide: MNAVPLRQSEPMPQGERVVTILGATGSIGQSTADLVRRGRGRYRVEALTAHSNVAELAKLARELGARFAAVAKEECYAELKAALAGSGIEVGAGESALVEAALRPANWVMAAMSGAAGLKPAMAAAGRGEIVALANKECLVCAGEAFMRHAAANNATVLPVDSEHNAIFQSLGAGRREDLVRIILTASGGPFRTATREQIENATVEQALKHPNWSMGRKITIDSATMFNKALEIIEAFHLFELKADQIDVLVHPQSIIHGLVEFADRSVVAQMGAPDMRTPIAHCLGWPHRIDGPATQLDLAKLTQLTFEAPDPVRFPALRLVREALVAGGAAPTVLNAANEVAVASFLDRKIPFGGIARLVEATLEALVAKGTAKAPQSADEALAVDHTARKTAAALLPEIALKAS.

NADPH-binding residues include threonine 25, glycine 26, serine 27, isoleucine 28, asparagine 53, and asparagine 136. Position 137 (lysine 137) interacts with 1-deoxy-D-xylulose 5-phosphate. Position 138 (glutamate 138) interacts with NADPH. Residue aspartate 162 participates in Mn(2+) binding. The 1-deoxy-D-xylulose 5-phosphate site is built by serine 163, glutamate 164, serine 188, and histidine 211. Glutamate 164 serves as a coordination point for Mn(2+). Glycine 217 contributes to the NADPH binding site. 1-deoxy-D-xylulose 5-phosphate is bound by residues serine 224, asparagine 229, lysine 230, and glutamate 233. Glutamate 233 lines the Mn(2+) pocket.

This sequence belongs to the DXR family. It depends on Mg(2+) as a cofactor. Requires Mn(2+) as cofactor.

The enzyme catalyses 2-C-methyl-D-erythritol 4-phosphate + NADP(+) = 1-deoxy-D-xylulose 5-phosphate + NADPH + H(+). Its pathway is isoprenoid biosynthesis; isopentenyl diphosphate biosynthesis via DXP pathway; isopentenyl diphosphate from 1-deoxy-D-xylulose 5-phosphate: step 1/6. Catalyzes the NADPH-dependent rearrangement and reduction of 1-deoxy-D-xylulose-5-phosphate (DXP) to 2-C-methyl-D-erythritol 4-phosphate (MEP). The chain is 1-deoxy-D-xylulose 5-phosphate reductoisomerase from Afipia carboxidovorans (strain ATCC 49405 / DSM 1227 / KCTC 32145 / OM5) (Oligotropha carboxidovorans).